We begin with the raw amino-acid sequence, 273 residues long: HTH-type transcriptional activator RhaS (273 aa).

The 99-residue stretch at Tyr-174–Gln-272 folds into the HTH araC/xylS-type domain. 2 consecutive DNA-binding regions (H-T-H motif) follow at residues Pro-191–Thr-212 and Val-239–Phe-262.

Binds DNA as a dimer.

The protein resides in the cytoplasm. Its function is as follows. Activates expression of the rhaBAD and rhaT operons. This chain is HTH-type transcriptional activator RhaS, found in Yersinia pestis bv. Antiqua (strain Antiqua).